Consider the following 370-residue polypeptide: Proline-rich protein 5-like (370 aa).

Residue serine 28 is modified to Phosphoserine. Disordered stretches follow at residues 312–346 (LGEEAGGEDKHLLLPPSFPPPHRQCSSEPSILDSP) and 351–370 (LEDVASGSQEDSELNCASLS).

It belongs to the PROTOR family. Interacts with the mammalian target of rapamycin complex 2 (mTORC2) which contains MTOR, MLST8, PRR5, RICTOR, MAPKAP1 and DEPTOR. Interacts with RFFL. Interacts (via C-terminus) with ZFP36 (via C-terminus); this interaction may accelerate ZFP36-mediated mRNA decay during stress. Interacts with RICTOR. Post-translationally, ubiquitinated. Ubiquitination by RFFL promotes proteasomal degradation of PRR5L thereby modifying the substrate-specific activity of the mTORC2 complex. Ubiquitination by RFFL is stimulated by LPA/lysophosphatidic acid.

Its function is as follows. Associates with the mTORC2 complex that regulates cellular processes including survival and organization of the cytoskeleton. Regulates the activity of the mTORC2 complex in a substrate-specific manner preventing for instance the specific phosphorylation of PKCs and thereby controlling cell migration. Plays a role in the stimulation of ZFP36-mediated mRNA decay of several ZFP36-associated mRNAs, such as TNF-alpha and GM-CSF, in response to stress. Required for ZFP36 localization to cytoplasmic stress granule (SG) and P-body (PB) in response to stress. This is Proline-rich protein 5-like (Prr5l) from Mus musculus (Mouse).